The sequence spans 492 residues: Cytochrome P450 monooxygenase rdc4 (492 aa).

Cys-435 contributes to the heme binding site.

It belongs to the cytochrome P450 family. Heme serves as cofactor.

It functions in the pathway secondary metabolite biosynthesis. Functionally, cytochrome P450 monooxygenase; part of the gene cluster that mediates the biosynthesis of radicicol, a resorcylic acid lactone (RAL) that irreversibly inhibits the HSP90 molecular chaperone, an important target for cancer chemotherapy. The radicicol cluster encodes only two apparent post-PKS enzymes, a cytochrome P450 monooxygenase (rdc4) and a non-heme halogenase (rdc2) that could introduce the epoxide and the chlorine, respectively. If this cluster includes all the genes required for radicicol biosynthesis, the remaining structural features of radicicol are presumably generated by the PKSs rdc1 and rdc5. The C-2' ketone could arise if the R-PKS rdc5 and NR-PKS rdc1 each carry out four iterations, in contrast to the five iteration-three iteration split for the hypothemycin PKSs. The origin of the cis 5',6' double bond is not known. The radicicol R-PKS rdc5 ER domain may catalyze either double bond isomerization or reduction in the third iteration. In Metacordyceps chlamydosporia (Nematophagous fungus), this protein is Cytochrome P450 monooxygenase rdc4.